Reading from the N-terminus, the 415-residue chain is Maltose excess protein 1, chloroplastic (415 aa).

The tract at residues 74–93 is disordered; the sequence is SESDSDSDFPHENQQGNPGL. The next 9 helical transmembrane spans lie at 139 to 159, 176 to 196, 199 to 219, 231 to 251, 252 to 272, 286 to 306, 322 to 342, 345 to 365, and 373 to 393; these read ALSAVPWLGMLTGLLGNLSLL, LGVVSTHIVLAQLTMAEAMPI, FVATSAVVTIGLIVNCLYYFG, DVITIGGLSVLPQIMWSTFVP, LVPNSILPGTTAFGIAVAAII, FVGSLSGWTATLMFMWMPVSQ, SITMLLSMMGNGLMIPRALFI, LMWLTGSLWATLFYGYGNILC, and SQSFFVAATIGLISWIGLALW.

As to expression, expressed in leaves and roots. Expressed in root cap cells.

It is found in the plastid. Its subcellular location is the chloroplast inner membrane. Probable maltose transporter. Essential for the conversion of starch to sucrose in leaves at night, probably via the export of maltose from the chloroplast. Required for root cap cells formation. In Arabidopsis thaliana (Mouse-ear cress), this protein is Maltose excess protein 1, chloroplastic (MEX1).